The primary structure comprises 236 residues: Probable ascorbate-specific transmembrane electron transporter 2 (236 aa).

Residues Met1–Pro11 are Cytoplasmic-facing. A helical membrane pass occupies residues Phe12–Ile32. The 205-residue stretch at Val15–Val219 folds into the Cytochrome b561 domain. The Extracellular segment spans residues Ser33–Pro53. His52 serves as a coordination point for heme b. Residues Val54–Phe74 form a helical membrane-spanning segment. Ala67–Pro75 serves as a coordination point for L-ascorbate. Over Pro75–Leu84 the chain is Cytoplasmic. Residues Ile85–Phe105 traverse the membrane as a helical segment. Heme b contacts are provided by His86 and His120. At Lys106–Trp122 the chain is on the extracellular side. Residue Leu116–Ile125 participates in monodehydro-L-ascorbate radical binding. Residues Leu123–Phe143 form a helical membrane-spanning segment. Topologically, residues Tyr144 to Arg153 are cytoplasmic. A helical transmembrane segment spans residues Gly154–Ala174. Residue His159 participates in heme b binding. Residues Glu175–Glu196 lie on the Extracellular side of the membrane. A helical membrane pass occupies residues Ala197–Ala217. At Ala218–Asn236 the chain is on the cytoplasmic side.

The cofactor is heme b.

The protein localises to the membrane. Its function is as follows. Two-heme-containing cytochrome. Catalyzes ascorbate-dependent trans-membrane electron transfer by utilizing a concerted H(+)/e(-) transfer mechanism. This chain is Probable ascorbate-specific transmembrane electron transporter 2, found in Oryza sativa subsp. japonica (Rice).